We begin with the raw amino-acid sequence, 514 residues long: MTLLPGDNSHYDYSALSCASDTSFHPAFFPQRQAIKGVFYRRAQRLRPQDDLHQSCSLGDRRRQIIINVGGIKYSLPWTTLDEFPLTRLGQLKACTNFDDILSVCDDYDVTCNEFFFDRNPGAFGTILTFLRAGKLRLLREMCALSFQEELLYWGIAEDHLDGCCKRRYLQKIEEFAEMMEREEEEEPLDSEDQESEGPSASEGRLSRCMRRLRDMVERPHSGLPGKVFACLSVLFVTVTAVNLSVSTLPSLREEEEQGQCSQMCHNVFIVESVCVGWFSLEFLLRFIQAPSKFAFLRSPLTLIDLVAILPYYVTLLVDGAASSRRKPSTGNSYLDKVGLVLRVLRALRILYVMRLARHSLGLQTLGLTARRCTREFGLLLLFLCVAIALFAPLLYVIENEMADSPEFTSIPACYWWAVITMTTVGYGDMVPRSTPGQVVALSSILSGILLMAFPVTSIFHTFSRSYLELKQEQERVLIRRAQYLIKTKSQLSGMSQDSDILFGSASSDTRDNN.

Over 1-224 (MTLLPGDNSH…DMVERPHSGL (224 aa)) the chain is Cytoplasmic. Over residues 180–196 (MEREEEEEPLDSEDQES) the composition is skewed to acidic residues. A disordered region spans residues 180–205 (MEREEEEEPLDSEDQESEGPSASEGR). Residues 225 to 246 (PGKVFACLSVLFVTVTAVNLSV) traverse the membrane as a helical segment. The Extracellular portion of the chain corresponds to 247–267 (STLPSLREEEEQGQCSQMCHN). A helical transmembrane segment spans residues 268-289 (VFIVESVCVGWFSLEFLLRFIQ). The Cytoplasmic portion of the chain corresponds to 290 to 300 (APSKFAFLRSP). The chain crosses the membrane as a helical span at residues 301–321 (LTLIDLVAILPYYVTLLVDGA). Over 322 to 338 (ASSRRKPSTGNSYLDKV) the chain is Extracellular. Residues 339 to 359 (GLVLRVLRALRILYVMRLARH) traverse the membrane as a helical; Voltage-sensor segment. Topologically, residues 360-374 (SLGLQTLGLTARRCT) are cytoplasmic. Residues 375-396 (REFGLLLLFLCVAIALFAPLLY) form a helical membrane-spanning segment. Residues 397–411 (VIENEMADSPEFTSI) are Extracellular-facing. The segment at residues 412-423 (PACYWWAVITMT) is an intramembrane region (helical). The Selectivity filter signature appears at 424 to 429 (TVGYGD). An intramembrane segment occupies 424–431 (TVGYGDMV). At 432-438 (PRSTPGQ) the chain is on the extracellular side. Residues 439–467 (VVALSSILSGILLMAFPVTSIFHTFSRSY) form a helical membrane-spanning segment. The Cytoplasmic segment spans residues 468 to 514 (LELKQEQERVLIRRAQYLIKTKSQLSGMSQDSDILFGSASSDTRDNN).

This sequence belongs to the potassium channel family. G (TC 1.A.1.2) subfamily. Kv6.1/KCNG1 sub-subfamily. Heterotetramer with KCNB1 or KCNB2.

Its subcellular location is the cell membrane. Its function is as follows. Regulatory alpha-subunit of the voltage-gated potassium (Kv) channel which, when coassembled with KCNB1 or KCNB2, can modulate their expression and their gating kinetics by acting on deactivation upon repolarization and inactivation during maintained depolarization. Potassium channel subunit that does not form functional channels by itself. This Mus musculus (Mouse) protein is Voltage-gated potassium channel regulatory subunit KCNG1.